Reading from the N-terminus, the 480-residue chain is Glutamate--tRNA ligase (480 aa).

The short motif at Pro9–Thr19 is the 'HIGH' region element. The 'KMSKS' region signature appears at Lys250–Arg254. Lys253 provides a ligand contact to ATP.

It belongs to the class-I aminoacyl-tRNA synthetase family. Glutamate--tRNA ligase type 1 subfamily. In terms of assembly, monomer.

Its subcellular location is the cytoplasm. The catalysed reaction is tRNA(Glu) + L-glutamate + ATP = L-glutamyl-tRNA(Glu) + AMP + diphosphate. Catalyzes the attachment of glutamate to tRNA(Glu) in a two-step reaction: glutamate is first activated by ATP to form Glu-AMP and then transferred to the acceptor end of tRNA(Glu). This Microcystis aeruginosa (strain NIES-843 / IAM M-2473) protein is Glutamate--tRNA ligase.